Reading from the N-terminus, the 1347-residue chain is Spermatogenesis-associated protein 31A1 (1347 aa).

Residues 23–43 (PWVLDIFLTLVFALGFFFLLL) traverse the membrane as a helical segment. Disordered stretches follow at residues 55–89 (PSPS…ECPR), 106–235 (GPHL…STLI), 373–397 (EQDT…GPQK), 628–658 (DESP…EAQK), 899–955 (PRGI…REAV), and 1085–1160 (HEEP…PPSV). The span at 60 to 82 (GKRKCPVGRRRRPRGRMKNHSLR) shows a compositional bias: basic residues. Over residues 165–178 (LASTPSPGPMTTSV) the composition is skewed to polar residues. Pro residues predominate over residues 198-222 (PEPPALFPHPPHTPDPLACSPPPPK). Polar residues-rich tracts occupy residues 631 to 651 (PGTS…STGE) and 927 to 948 (LTYS…SSKA). Composition is skewed to basic and acidic residues over residues 1108–1127 (HKSE…RLEG) and 1137–1146 (RKTEDTHQDE).

The protein belongs to the SPATA31 family.

It localises to the membrane. Functionally, may play a role in spermatogenesis. The chain is Spermatogenesis-associated protein 31A1 from Homo sapiens (Human).